The primary structure comprises 874 residues: Alanine--tRNA ligase (874 aa).

Residues His-563, His-567, Cys-665, and His-669 each contribute to the Zn(2+) site.

Belongs to the class-II aminoacyl-tRNA synthetase family. The cofactor is Zn(2+).

The protein resides in the cytoplasm. The catalysed reaction is tRNA(Ala) + L-alanine + ATP = L-alanyl-tRNA(Ala) + AMP + diphosphate. Catalyzes the attachment of alanine to tRNA(Ala) in a two-step reaction: alanine is first activated by ATP to form Ala-AMP and then transferred to the acceptor end of tRNA(Ala). Also edits incorrectly charged Ser-tRNA(Ala) and Gly-tRNA(Ala) via its editing domain. The polypeptide is Alanine--tRNA ligase (Histophilus somni (strain 2336) (Haemophilus somnus)).